The following is a 407-amino-acid chain: Argininosuccinate synthase (407 aa).

ATP is bound by residues 16 to 24 and Ala44; that span reads AYSGGLDTS. 2 residues coordinate L-citrulline: Tyr96 and Ser101. Gly126 contributes to the ATP binding site. L-aspartate contacts are provided by Thr128, Asn132, and Asp133. Position 132 (Asn132) interacts with L-citrulline. Positions 136, 185, 194, 270, and 282 each coordinate L-citrulline.

The protein belongs to the argininosuccinate synthase family. Type 1 subfamily. Homotetramer.

It localises to the cytoplasm. It catalyses the reaction L-citrulline + L-aspartate + ATP = 2-(N(omega)-L-arginino)succinate + AMP + diphosphate + H(+). The protein operates within amino-acid biosynthesis; L-arginine biosynthesis; L-arginine from L-ornithine and carbamoyl phosphate: step 2/3. In Shewanella frigidimarina (strain NCIMB 400), this protein is Argininosuccinate synthase.